Reading from the N-terminus, the 722-residue chain is Protein HAPLESS 2-A (722 aa).

Residues 1–24 (MPRRRGTPLPTILLLLAFVGGACG) form the signal peptide. Over 25–552 (TEILSKSRLE…LFDFGCHIQY (528 aa)) the chain is Extracellular. 7 cysteine pairs are disulfide-bonded: Cys-36–Cys-48, Cys-129–Cys-159, Cys-141–Cys-188, Cys-160–Cys-315, Cys-162–Cys-171, Cys-298–Cys-322, and Cys-435–Cys-473. The chain crosses the membrane as a helical span at residues 553 to 573 (VCIGWILLLLLIPAAVVFLWL). Topologically, residues 574 to 722 (LHQEGLFDPL…HRDGHYSPSV (149 aa)) are cytoplasmic. Basic residues predominate over residues 598–641 (RRRHQKGRHHRHHHDHRHRHGHSHGDHHHHYHGGHHQRRRHHHP). Disordered stretches follow at residues 598–665 (RRRH…RNHH) and 680–722 (RLDR…SPSV). Basic and acidic residues predominate over residues 646 to 662 (VEGHHHDRQQHSHEAGR). The span at 701 to 711 (RRSRHERHGGH) shows a compositional bias: basic residues. The span at 712–722 (GHRDGHYSPSV) shows a compositional bias: basic and acidic residues.

The protein belongs to the HAP2/GCS1 family.

Its subcellular location is the endoplasmic reticulum membrane. It localises to the cell membrane. Its function is as follows. Required for male fertility. Plays a role in pollen tube guidance and successful gamete attachment. Essential for the fusion of gametes during double fertilization, where one male gamete fuses with the egg to produce a zygote, and another male gamete fuses with the central cell to produce the endosperm. Mediates the fusion of cell membranes. Not required for pollen tube outgrowth. This chain is Protein HAPLESS 2-A (HAP2A), found in Oryza sativa subsp. japonica (Rice).